The chain runs to 310 residues: Porphobilinogen deaminase (310 aa).

C242 carries the post-translational modification S-(dipyrrolylmethanemethyl)cysteine.

This sequence belongs to the HMBS family. As to quaternary structure, monomer. Dipyrromethane is required as a cofactor.

It carries out the reaction 4 porphobilinogen + H2O = hydroxymethylbilane + 4 NH4(+). Its pathway is porphyrin-containing compound metabolism; protoporphyrin-IX biosynthesis; coproporphyrinogen-III from 5-aminolevulinate: step 2/4. Tetrapolymerization of the monopyrrole PBG into the hydroxymethylbilane pre-uroporphyrinogen in several discrete steps. The polypeptide is Porphobilinogen deaminase (Shewanella baltica (strain OS155 / ATCC BAA-1091)).